We begin with the raw amino-acid sequence, 228 residues long: UPF0173 metal-dependent hydrolase BLi03080/BL00413 (228 aa).

Belongs to the UPF0173 family.

The protein is UPF0173 metal-dependent hydrolase BLi03080/BL00413 of Bacillus licheniformis (strain ATCC 14580 / DSM 13 / JCM 2505 / CCUG 7422 / NBRC 12200 / NCIMB 9375 / NCTC 10341 / NRRL NRS-1264 / Gibson 46).